The chain runs to 215 residues: Imidazole glycerol phosphate synthase subunit HisH (215 aa).

A Glutamine amidotransferase type-1 domain is found at 7–215 (TIAVIDYGMG…LLKNFVEWQP (209 aa)). The active-site Nucleophile is Cys-86. Residues His-195 and Glu-197 contribute to the active site.

Heterodimer of HisH and HisF.

The protein resides in the cytoplasm. The catalysed reaction is 5-[(5-phospho-1-deoxy-D-ribulos-1-ylimino)methylamino]-1-(5-phospho-beta-D-ribosyl)imidazole-4-carboxamide + L-glutamine = D-erythro-1-(imidazol-4-yl)glycerol 3-phosphate + 5-amino-1-(5-phospho-beta-D-ribosyl)imidazole-4-carboxamide + L-glutamate + H(+). It catalyses the reaction L-glutamine + H2O = L-glutamate + NH4(+). It functions in the pathway amino-acid biosynthesis; L-histidine biosynthesis; L-histidine from 5-phospho-alpha-D-ribose 1-diphosphate: step 5/9. Functionally, IGPS catalyzes the conversion of PRFAR and glutamine to IGP, AICAR and glutamate. The HisH subunit catalyzes the hydrolysis of glutamine to glutamate and ammonia as part of the synthesis of IGP and AICAR. The resulting ammonia molecule is channeled to the active site of HisF. This Dechloromonas aromatica (strain RCB) protein is Imidazole glycerol phosphate synthase subunit HisH.